We begin with the raw amino-acid sequence, 409 residues long: Failed axon connections homolog (409 aa).

Residues 68 to 88 traverse the membrane as a helical segment; the sequence is YLTGGALLAAAAYLLHELLVI. Residues 372 to 409 form a disordered region; that stretch reads DEGAENSFSRTPDTDFTGHSLFDSDVDMDDYTDHEQCK.

Belongs to the FAX family.

The protein resides in the membrane. Its function is as follows. May play a role in axonal development. The sequence is that of Failed axon connections homolog (FAXC) from Homo sapiens (Human).